The following is a 906-amino-acid chain: Protein translocase subunit SecA (906 aa).

Residues glutamine 86, 104 to 108 (GEGKT), and aspartate 499 contribute to the ATP site. Residues 865-885 (VSRIDPKDRNPEDPTSWGRVS) are disordered. Residues cysteine 890, cysteine 892, cysteine 901, and histidine 902 each coordinate Zn(2+).

Belongs to the SecA family. Monomer and homodimer. Part of the essential Sec protein translocation apparatus which comprises SecA, SecYEG and auxiliary proteins SecDF-YajC and YidC. Requires Zn(2+) as cofactor.

The protein localises to the cell inner membrane. It is found in the cytoplasm. The catalysed reaction is ATP + H2O + cellular proteinSide 1 = ADP + phosphate + cellular proteinSide 2.. Part of the Sec protein translocase complex. Interacts with the SecYEG preprotein conducting channel. Has a central role in coupling the hydrolysis of ATP to the transfer of proteins into and across the cell membrane, serving both as a receptor for the preprotein-SecB complex and as an ATP-driven molecular motor driving the stepwise translocation of polypeptide chains across the membrane. This is Protein translocase subunit SecA from Rickettsia canadensis (strain McKiel).